A 622-amino-acid chain; its full sequence is DNA mismatch repair protein MutL (622 aa).

Residues 399 to 414 (SSQNFHPDENDYRAEE) show a composition bias toward basic and acidic residues. The segment at 399-422 (SSQNFHPDENDYRAEEASPAEENP) is disordered.

Belongs to the DNA mismatch repair MutL/HexB family.

In terms of biological role, this protein is involved in the repair of mismatches in DNA. It is required for dam-dependent methyl-directed DNA mismatch repair. May act as a 'molecular matchmaker', a protein that promotes the formation of a stable complex between two or more DNA-binding proteins in an ATP-dependent manner without itself being part of a final effector complex. The polypeptide is DNA mismatch repair protein MutL (Phocaeicola vulgatus (strain ATCC 8482 / DSM 1447 / JCM 5826 / CCUG 4940 / NBRC 14291 / NCTC 11154) (Bacteroides vulgatus)).